Here is an 89-residue protein sequence, read N- to C-terminus: Small ribosomal subunit protein uS15 (89 aa).

It belongs to the universal ribosomal protein uS15 family. As to quaternary structure, part of the 30S ribosomal subunit. Forms a bridge to the 50S subunit in the 70S ribosome, contacting the 23S rRNA.

One of the primary rRNA binding proteins, it binds directly to 16S rRNA where it helps nucleate assembly of the platform of the 30S subunit by binding and bridging several RNA helices of the 16S rRNA. Its function is as follows. Forms an intersubunit bridge (bridge B4) with the 23S rRNA of the 50S subunit in the ribosome. The sequence is that of Small ribosomal subunit protein uS15 from Allorhizobium ampelinum (strain ATCC BAA-846 / DSM 112012 / S4) (Agrobacterium vitis (strain S4)).